The chain runs to 223 residues: Nitrate reductase gamma chain (223 aa).

The helical transmembrane segment at 2–27 (SGQILWGIMPYIVLTIFIGGHIYRYQ) threads the bilayer. Topologically, residues 28 to 45 (HDQFGWTAKSSELLEKKK) are cytoplasmic. The chain crosses the membrane as a helical span at residues 46 to 68 (LAAGSTLFHWGLLCVVGGHVMGI). Residues His-54 and His-64 each contribute to the heme b site. Over 69-81 (LIPEGVYASLGIS) the chain is Extracellular. Residues 82–111 (EHMYHKMAIGAGLPAGIAACTGLVILTYRR) traverse the membrane as a helical segment. Residues 112–123 (LFDKRIRKTSSP) lie on the Cytoplasmic side of the membrane. The chain crosses the membrane as a helical span at residues 124 to 147 (SDILTLLLLLFMMLSGVAATFLNI). The Extracellular segment spans residues 148–180 (DSKGFDYRTTVGPWFREIVLFRPDASLMESVPL). The chain crosses the membrane as a helical span at residues 181 to 196 (WFKFHIVIGYVVFILW). His-185 and His-203 together coordinate heme b. Residues 197–223 (PFTRLVHVFSLPLKYLTRSYVVYRKRS) are Cytoplasmic-facing.

Heme is required as a cofactor.

It is found in the cell membrane. It catalyses the reaction nitrate + a quinol = a quinone + nitrite + H2O. The gamma chain is a membrane-embedded heme-iron unit resembling cytochrome b, which transfers electrons from quinones to the beta subunit. The chain is Nitrate reductase gamma chain (narI) from Bacillus subtilis (strain 168).